A 273-amino-acid chain; its full sequence is Orotidine 5'-phosphate decarboxylase (273 aa).

Lysine 97 serves as the catalytic Proton donor.

It belongs to the OMP decarboxylase family. Type 2 subfamily.

The catalysed reaction is orotidine 5'-phosphate + H(+) = UMP + CO2. It participates in pyrimidine metabolism; UMP biosynthesis via de novo pathway; UMP from orotate: step 2/2. This chain is Orotidine 5'-phosphate decarboxylase, found in Cellvibrio japonicus (strain Ueda107) (Pseudomonas fluorescens subsp. cellulosa).